A 463-amino-acid chain; its full sequence is Argininosuccinate lyase (463 aa).

This sequence belongs to the lyase 1 family. Argininosuccinate lyase subfamily.

The protein localises to the cytoplasm. It carries out the reaction 2-(N(omega)-L-arginino)succinate = fumarate + L-arginine. Its pathway is amino-acid biosynthesis; L-arginine biosynthesis; L-arginine from L-ornithine and carbamoyl phosphate: step 3/3. The chain is Argininosuccinate lyase from Staphylococcus epidermidis (strain ATCC 35984 / DSM 28319 / BCRC 17069 / CCUG 31568 / BM 3577 / RP62A).